A 330-amino-acid chain; its full sequence is GMP reductase (330 aa).

Residue C180 is the Thioimidate intermediate of the active site. An NADP(+)-binding site is contributed by 209–232 (LIADGGIRHNGDIAKSVRFGASMV).

Belongs to the IMPDH/GMPR family. GuaC type 2 subfamily.

The catalysed reaction is IMP + NH4(+) + NADP(+) = GMP + NADPH + 2 H(+). Catalyzes the irreversible NADPH-dependent deamination of GMP to IMP. It functions in the conversion of nucleobase, nucleoside and nucleotide derivatives of G to A nucleotides, and in maintaining the intracellular balance of A and G nucleotides. The sequence is that of GMP reductase from Lactobacillus delbrueckii subsp. bulgaricus (strain ATCC 11842 / DSM 20081 / BCRC 10696 / JCM 1002 / NBRC 13953 / NCIMB 11778 / NCTC 12712 / WDCM 00102 / Lb 14).